Here is a 90-residue protein sequence, read N- to C-terminus: uncharacterized protein (90 aa).

Residues 36 to 82 are a coiled coil; it reads DQEYSDAQMQLEDAVNALNKLWLSSNDQQREQLYRMRLQLQSLQNNM.

This is an uncharacterized protein from Bacillus subtilis (strain 168).